The following is a 37-amino-acid chain: Large ribosomal subunit protein bL36 (37 aa).

It belongs to the bacterial ribosomal protein bL36 family.

The polypeptide is Large ribosomal subunit protein bL36 (Dehalococcoides mccartyi (strain ATCC BAA-2266 / KCTC 15142 / 195) (Dehalococcoides ethenogenes (strain 195))).